The following is a 210-amino-acid chain: MAIERYFIREAVREMLIDEFLEKELRRAGYGGLDIKKTPLGTKVIIFAANPGYVIGRGGRRIRELTRILEKQFGLENPQIEVEEIKNPYLNAKVQAVRLAQALERGIHFRRAAYAALRAIMNNGARGVEIRLSGKLTGERAKSIRFYQGYLAKVGNPAETLVSKGYAQALLKLGVIGVKVAIMPPGARLPDEIEIIEKPVEEEVVSNEAE.

Positions 17–86 (IDEFLEKELR…NPQIEVEEIK (70 aa)) constitute a KH type-2 domain.

Belongs to the universal ribosomal protein uS3 family. Part of the 30S ribosomal subunit.

Its function is as follows. Binds the lower part of the 30S subunit head. The sequence is that of Small ribosomal subunit protein uS3 from Pyrococcus furiosus (strain ATCC 43587 / DSM 3638 / JCM 8422 / Vc1).